Consider the following 129-residue polypeptide: Replication initiation control protein YabA (129 aa).

Residues His-103, Cys-105, Cys-119, and Cys-122 each contribute to the Zn(2+) site.

Belongs to the YabA family. In terms of assembly, homotetramer. Interacts with both DnaA and DnaN, acting as a bridge between these two proteins. It depends on Zn(2+) as a cofactor.

Its subcellular location is the cytoplasm. It localises to the nucleoid. Involved in control of chromosome replication initiation. Inhibits the cooperative binding of DnaA to the oriC region, thus negatively regulating initiation of chromosome replication. Inhibits the ability of DnaA-ATP to form a helix on DNA; does not disassemble preformed DnaA-DNA helices. Decreases the residence time of DnaA on the chromosome at its binding sites (oriC, replication forks and promoter-binding sites). Tethers DnaA to the replication machinery via the DNA polymerase beta sliding clamp subunit (dnaN). Associates with oriC and other DnaA targets on the chromosome in a DnaA-dependent manner. In Listeria innocua serovar 6a (strain ATCC BAA-680 / CLIP 11262), this protein is Replication initiation control protein YabA.